We begin with the raw amino-acid sequence, 349 residues long: tRNA pseudouridine synthase D (349 aa).

Phe-26 contacts substrate. Asp-79 acts as the Nucleophile in catalysis. Asn-128 lines the substrate pocket. The TRUD domain maps to 154 to 302 (GVPNYFGSQR…VEGSRRAVLL (149 aa)). Residue Phe-328 participates in substrate binding.

Belongs to the pseudouridine synthase TruD family.

The catalysed reaction is uridine(13) in tRNA = pseudouridine(13) in tRNA. Its function is as follows. Responsible for synthesis of pseudouridine from uracil-13 in transfer RNAs. The polypeptide is tRNA pseudouridine synthase D (Yersinia pseudotuberculosis serotype O:1b (strain IP 31758)).